Consider the following 137-residue polypeptide: Large ribosomal subunit protein uL11 (137 aa).

This sequence belongs to the universal ribosomal protein uL11 family. In terms of assembly, part of the ribosomal stalk of the 50S ribosomal subunit. Interacts with L10 and the large rRNA to form the base of the stalk. L10 forms an elongated spine to which L12 dimers bind in a sequential fashion forming a multimeric L10(L12)X complex. In terms of processing, one or more lysine residues are methylated.

Its function is as follows. Forms part of the ribosomal stalk which helps the ribosome interact with GTP-bound translation factors. In Mycoplasma pneumoniae (strain ATCC 29342 / M129 / Subtype 1) (Mycoplasmoides pneumoniae), this protein is Large ribosomal subunit protein uL11.